Reading from the N-terminus, the 525-residue chain is GMP synthase [glutamine-hydrolyzing] (525 aa).

The Glutamine amidotransferase type-1 domain maps to 9 to 207 (RILILDFGSQ…VRDICQCEAL (199 aa)). Cys-86 acts as the Nucleophile in catalysis. Catalysis depends on residues His-181 and Glu-183. One can recognise a GMPS ATP-PPase domain in the interval 208 to 400 (WTPAKIIDDA…LGLPYDMLYR (193 aa)). Residue 235–241 (SGGVDSS) coordinates ATP.

As to quaternary structure, homodimer.

It carries out the reaction XMP + L-glutamine + ATP + H2O = GMP + L-glutamate + AMP + diphosphate + 2 H(+). It participates in purine metabolism; GMP biosynthesis; GMP from XMP (L-Gln route): step 1/1. Its function is as follows. Catalyzes the synthesis of GMP from XMP. The sequence is that of GMP synthase [glutamine-hydrolyzing] from Salmonella typhimurium (strain LT2 / SGSC1412 / ATCC 700720).